Consider the following 460-residue polypeptide: MASPPAHRSSKAADEELPKASSTFHPSLWGSFFLTYQPPTAPQRANMEERAEVLRERVRKVLKGSTTDQLPETVNLILTLQRLGLGYYYENEIDKLLHQIYSNSDYNEKDLNLVSQRFYLLRKNGYDVPSDVFLSFKTEEGGFACAAADTRSLLSLYNAAHLRKHGEEVLDEAISSTRLRLQDLLGRLLPESPFAKEVSSSLRTPLFRRVGILEARNYIPIYEKEATRNEAVLELAKLNFNLQQLDFCEELKHCSAWWNEMIAKSKLTFVRDRIVEEYFWMNGACYDPPYSLSRIILTKITGLITIIDDMFDTHGTTEDCMKFAEAFGRWDESAIHLLPEYMKDFYILMLETFQSFEDALGPEKSYRVLYLKQAMERLVELYSKEIKWRDDDYVPTMSEHLQVSAETIATIALTCSAYAGMGDMSITKETFEWALSFPQFNYKNFWFICTALQRCRIDQA.

Positions 308 and 312 each coordinate Mg(2+). The substrate site is built by aspartate 308 and aspartate 312. The short motif at 308 to 312 (DDMFD) is the DDXXD motif element.

The protein belongs to the terpene synthase family. Monomer. Mg(2+) serves as cofactor. Requires Mn(2+) as cofactor.

The protein localises to the cytoplasm. The protein operates within secondary metabolite biosynthesis; terpenoid biosynthesis. Non-functional sesquiterpene synthase due to a frameshift removing part of the catalytic site. This chain is Inactive 7-epi-sesquithujene synthase, found in Zea mays (Maize).